Reading from the N-terminus, the 114-residue chain is UPF0102 protein jhp_0762 (114 aa).

The protein belongs to the UPF0102 family.

The polypeptide is UPF0102 protein jhp_0762 (Helicobacter pylori (strain J99 / ATCC 700824) (Campylobacter pylori J99)).